Reading from the N-terminus, the 99-residue chain is Small ribosomal subunit protein cS23 (99 aa).

This sequence belongs to the chloroplast-specific ribosomal protein cS23 family. As to quaternary structure, part of the 30S ribosomal subunit.

The protein localises to the plastid. It is found in the chloroplast. Probably a ribosomal protein or a ribosome-associated protein. The polypeptide is Small ribosomal subunit protein cS23 (Gracilaria tenuistipitata var. liui (Red alga)).